A 156-amino-acid polypeptide reads, in one-letter code: Deoxyuridine 5'-triphosphate nucleotidohydrolase (156 aa).

Substrate is bound by residues 76 to 78, asparagine 89, 93 to 95, and lysine 103; these read RSG and TVD.

It belongs to the dUTPase family. Requires Mg(2+) as cofactor.

The enzyme catalyses dUTP + H2O = dUMP + diphosphate + H(+). The protein operates within pyrimidine metabolism; dUMP biosynthesis; dUMP from dCTP (dUTP route): step 2/2. Its function is as follows. This enzyme is involved in nucleotide metabolism: it produces dUMP, the immediate precursor of thymidine nucleotides and it decreases the intracellular concentration of dUTP so that uracil cannot be incorporated into DNA. This chain is Deoxyuridine 5'-triphosphate nucleotidohydrolase, found in Rhizobium johnstonii (strain DSM 114642 / LMG 32736 / 3841) (Rhizobium leguminosarum bv. viciae).